The following is a 463-amino-acid chain: SCF E3 ubiquitin ligase complex F-box protein pof2 (463 aa).

Positions 1–42 (MRVPNEVCFNILSYLEADELRCKSTVCTSWRNFIIPTLWEKV) constitute an F-box domain. 10 LRR repeats span residues 145 to 170 (CPNL…IIKR), 171 to 196 (CPYL…LSEK), 198 to 220 (DLIE…SRLV), 225 to 247 (GLKE…LNLN), 249 to 271 (ELDA…DIEL), 278 to 299 (KLNS…LSLT), 304 to 326 (SLTT…CLLK), 328 to 353 (CKNI…IAKL), 354 to 378 (PYLQ…LSGS), and 380 to 405 (SRNL…LMYN).

As to quaternary structure, part of a SCF E3 ubiquitin ligase complex. Interacts with skp1.

Its subcellular location is the mitochondrion. Its function is as follows. Involved in substrate recognition in ubiquitin-dependent degradation. This Schizosaccharomyces pombe (strain 972 / ATCC 24843) (Fission yeast) protein is SCF E3 ubiquitin ligase complex F-box protein pof2 (pof2).